Reading from the N-terminus, the 227-residue chain is MRIDIVTLFPEFFVSPLQCSLLARAIAGGVCNIAITNPRDFAADRYRTVDDTPYGGGAGMVLKPEPLFAAVESLPIIAPRAVILLTPQGRPLKQVFLRSLAADYAQLVLLCGHYEGVDERVRAHLATHEISLGDFVLTGGEIPALALIDGIVRLLPGTVGNRASLESESFEDNLLEYPQYTRPADFRGWQVPEVLLSGHHAQIAHWRREQQLTRTRERRPDLLPPEA.

Residues G112 and 132-137 (LGDFVL) contribute to the S-adenosyl-L-methionine site.

This sequence belongs to the RNA methyltransferase TrmD family. In terms of assembly, homodimer.

The protein resides in the cytoplasm. It carries out the reaction guanosine(37) in tRNA + S-adenosyl-L-methionine = N(1)-methylguanosine(37) in tRNA + S-adenosyl-L-homocysteine + H(+). In terms of biological role, specifically methylates guanosine-37 in various tRNAs. The polypeptide is tRNA (guanine-N(1)-)-methyltransferase (Gloeobacter violaceus (strain ATCC 29082 / PCC 7421)).